Consider the following 479-residue polypeptide: Anaerobic nitric oxide reductase flavorubredoxin (479 aa).

The zinc metallo-hydrolase stretch occupies residues 30–210 (LRGSSYNSYL…PFSRLVTPKI (181 aa)). The Fe cation site is built by histidine 79, glutamate 81, aspartate 83, histidine 147, aspartate 166, and histidine 227. In terms of domain architecture, Flavodoxin-like spans 254 to 393 (ITIFYDTMSN…LCREHGREIA (140 aa)). FMN is bound by residues 260–264 (TMSNN) and 342–369 (AFGS…EMSL). The region spanning 423 to 474 (GPRMQCSVCQWIYDPAKGEPMQDVAPGTPWSEVPDNFLCPECSLGKDVFEEL) is the Rubredoxin-like domain. Residues cysteine 428, cysteine 431, cysteine 461, and cysteine 464 each coordinate Fe cation.

It in the N-terminal section; belongs to the zinc metallo-hydrolase group 3 family. In terms of assembly, homotetramer. Fe cation is required as a cofactor. It depends on FMN as a cofactor.

It localises to the cytoplasm. Its pathway is nitrogen metabolism; nitric oxide reduction. In terms of biological role, anaerobic nitric oxide reductase; uses NADH to detoxify nitric oxide (NO), protecting several 4Fe-4S NO-sensitive enzymes. Has at least 2 reductase partners, only one of which (NorW, flavorubredoxin reductase) has been identified. NO probably binds to the di-iron center; electrons enter from the NorW at rubredoxin and are transferred sequentially to the FMN center and the di-iron center. Also able to function as an aerobic oxygen reductase. The chain is Anaerobic nitric oxide reductase flavorubredoxin from Shigella dysenteriae serotype 1 (strain Sd197).